Reading from the N-terminus, the 72-residue chain is Translation initiation factor IF-1 (72 aa).

The S1-like domain occupies 1–72 (MAKEEAIEVE…TRGRITYREK (72 aa)).

It belongs to the IF-1 family. As to quaternary structure, component of the 30S ribosomal translation pre-initiation complex which assembles on the 30S ribosome in the order IF-2 and IF-3, IF-1 and N-formylmethionyl-tRNA(fMet); mRNA recruitment can occur at any time during PIC assembly.

The protein resides in the cytoplasm. Functionally, one of the essential components for the initiation of protein synthesis. Stabilizes the binding of IF-2 and IF-3 on the 30S subunit to which N-formylmethionyl-tRNA(fMet) subsequently binds. Helps modulate mRNA selection, yielding the 30S pre-initiation complex (PIC). Upon addition of the 50S ribosomal subunit IF-1, IF-2 and IF-3 are released leaving the mature 70S translation initiation complex. In Syntrophotalea carbinolica (strain DSM 2380 / NBRC 103641 / GraBd1) (Pelobacter carbinolicus), this protein is Translation initiation factor IF-1.